The following is a 206-amino-acid chain: Thymidylate kinase (206 aa).

14 to 21 (GGEGIGKS) lines the ATP pocket.

This sequence belongs to the thymidylate kinase family.

It catalyses the reaction dTMP + ATP = dTDP + ADP. Phosphorylation of dTMP to form dTDP in both de novo and salvage pathways of dTTP synthesis. The chain is Thymidylate kinase from Rickettsia bellii (strain OSU 85-389).